A 511-amino-acid chain; its full sequence is Pentatricopeptide repeat-containing protein At5g08510 (511 aa).

PPR repeat units lie at residues cysteine 46–proline 80, serine 81–serine 115, aspartate 116–arginine 146, aspartate 147–serine 181, tryptophan 182–proline 213, asparagine 214–aspartate 248, asparagine 249–glutamine 279, asparagine 281–proline 315, aspartate 316–valine 346, and lysine 352–lysine 382. The interval valine 387–valine 462 is type E motif. Residues glycine 463–lysine 494 form a type E(+) motif region.

Belongs to the PPR family. PCMP-E subfamily.

This chain is Pentatricopeptide repeat-containing protein At5g08510 (PCMP-E20), found in Arabidopsis thaliana (Mouse-ear cress).